The sequence spans 256 residues: uncharacterized protein (256 aa).

This is an uncharacterized protein from Escherichia coli (strain K12).